The primary structure comprises 377 residues: Actin-related protein 2/3 complex subunit 1 (377 aa).

WD repeat units follow at residues 9–48, 53–92, 98–139, 144–183, and 203–242; these read ILPK…WKHA, DHDK…TWKQ, RLNR…WVSK, PLRS…VDAK, and PSGG…QPPR. Residues 293–313 form a disordered region; sequence GTSKTSFTHTGNTGEGREEEG. Residues 342–376 form a WD 6 repeat; sequence VHQNMIATLRPYAGTPGNITAFTSSGTDGRVVLWT.

The protein belongs to the WD repeat ARPC1 family. As to quaternary structure, component of the Arp2/3 complex composed of arp2, act2, arc1/p41-ARC, arc2/p34-ARC, arc3/p21-ARC, arc4/p20-ARC and arc5/p16-ARC.

The protein localises to the cytoplasm. It localises to the cytoskeleton. The protein resides in the actin patch. Functionally, functions as a component of the Arp2/3 complex which is involved in regulation of actin polymerization and together with an activating nucleation-promoting factor (NPF) mediates the formation of branched actin networks. The polypeptide is Actin-related protein 2/3 complex subunit 1 (arc1) (Schizosaccharomyces pombe (strain 972 / ATCC 24843) (Fission yeast)).